A 112-amino-acid chain; its full sequence is Putative pterin-4-alpha-carbinolamine dehydratase (112 aa).

It belongs to the pterin-4-alpha-carbinolamine dehydratase family.

The catalysed reaction is (4aS,6R)-4a-hydroxy-L-erythro-5,6,7,8-tetrahydrobiopterin = (6R)-L-erythro-6,7-dihydrobiopterin + H2O. The protein is Putative pterin-4-alpha-carbinolamine dehydratase of Shewanella baltica (strain OS155 / ATCC BAA-1091).